Reading from the N-terminus, the 207-residue chain is Thiamine-phosphate synthase (207 aa).

4-amino-2-methyl-5-(diphosphooxymethyl)pyrimidine contacts are provided by residues 38-42 (QYRAK) and Asn70. The Mg(2+) site is built by Asp71 and Asp90. Thr109 contributes to the 4-amino-2-methyl-5-(diphosphooxymethyl)pyrimidine binding site. 135–137 (TNS) contributes to the 2-[(2R,5Z)-2-carboxy-4-methylthiazol-5(2H)-ylidene]ethyl phosphate binding site. Lys138 is a binding site for 4-amino-2-methyl-5-(diphosphooxymethyl)pyrimidine. 2-[(2R,5Z)-2-carboxy-4-methylthiazol-5(2H)-ylidene]ethyl phosphate contacts are provided by residues Gly165 and 185 to 186 (IS).

It belongs to the thiamine-phosphate synthase family. Requires Mg(2+) as cofactor.

It carries out the reaction 2-[(2R,5Z)-2-carboxy-4-methylthiazol-5(2H)-ylidene]ethyl phosphate + 4-amino-2-methyl-5-(diphosphooxymethyl)pyrimidine + 2 H(+) = thiamine phosphate + CO2 + diphosphate. The enzyme catalyses 2-(2-carboxy-4-methylthiazol-5-yl)ethyl phosphate + 4-amino-2-methyl-5-(diphosphooxymethyl)pyrimidine + 2 H(+) = thiamine phosphate + CO2 + diphosphate. It catalyses the reaction 4-methyl-5-(2-phosphooxyethyl)-thiazole + 4-amino-2-methyl-5-(diphosphooxymethyl)pyrimidine + H(+) = thiamine phosphate + diphosphate. The protein operates within cofactor biosynthesis; thiamine diphosphate biosynthesis; thiamine phosphate from 4-amino-2-methyl-5-diphosphomethylpyrimidine and 4-methyl-5-(2-phosphoethyl)-thiazole: step 1/1. Its function is as follows. Condenses 4-methyl-5-(beta-hydroxyethyl)thiazole monophosphate (THZ-P) and 2-methyl-4-amino-5-hydroxymethyl pyrimidine pyrophosphate (HMP-PP) to form thiamine monophosphate (TMP). The sequence is that of Thiamine-phosphate synthase from Clostridium perfringens (strain 13 / Type A).